We begin with the raw amino-acid sequence, 98 residues long: Phosphoribosyl-ATP pyrophosphatase (98 aa).

Belongs to the PRA-PH family.

Its subcellular location is the cytoplasm. It carries out the reaction 1-(5-phospho-beta-D-ribosyl)-ATP + H2O = 1-(5-phospho-beta-D-ribosyl)-5'-AMP + diphosphate + H(+). Its pathway is amino-acid biosynthesis; L-histidine biosynthesis; L-histidine from 5-phospho-alpha-D-ribose 1-diphosphate: step 2/9. In Haloarcula marismortui (strain ATCC 43049 / DSM 3752 / JCM 8966 / VKM B-1809) (Halobacterium marismortui), this protein is Phosphoribosyl-ATP pyrophosphatase.